The following is a 91-amino-acid chain: Small ribosomal subunit protein uS19 (91 aa).

Belongs to the universal ribosomal protein uS19 family.

Functionally, protein S19 forms a complex with S13 that binds strongly to the 16S ribosomal RNA. The chain is Small ribosomal subunit protein uS19 from Synechococcus sp. (strain CC9311).